The primary structure comprises 839 residues: Taste receptor type 1 member 2 (839 aa).

Positions 1–19 (MRPRATTICSLFFLLRVLA) are cleaved as a signal peptide. At 20 to 566 (EPAKNSDFYL…AFLEWHEAPT (547 aa)) the chain is on the extracellular side. N-linked (GlcNAc...) asparagine glycans are attached at residues asparagine 84, asparagine 127, asparagine 248, asparagine 292, asparagine 312, asparagine 368, asparagine 428, asparagine 487, and asparagine 527. Residues 567 to 587 (IVVALLAALGFLSTLAILVIF) form a helical membrane-spanning segment. At 588–602 (WRHFQTPMVRSAGGP) the chain is on the cytoplasmic side. A helical membrane pass occupies residues 603–623 (MCFLMLTLLLVAYMVVPVYVG). Topologically, residues 624–635 (PPKVSTCFCRQA) are extracellular. Residues 636 to 656 (LFPLCFTICISCIAVRSFQIV) traverse the membrane as a helical segment. The Cytoplasmic segment spans residues 657-681 (CVFKMASRFPRAYSYWVRYQGPYVS). Residues 682-702 (MAFITVLKMVTVVIGMLATGL) traverse the membrane as a helical segment. Over 703–727 (NPTTRIDPDDPKIMIVSCNPNYRNS) the chain is Extracellular. The chain crosses the membrane as a helical span at residues 728 to 748 (LFFNTGLDLLLSVVGFSFAYM). The Cytoplasmic portion of the chain corresponds to 749-760 (GKELPTNYNEAK). Residues 761-781 (FITLSMTFYFTSSVSLCTFMS) traverse the membrane as a helical segment. Topologically, residues 782 to 784 (AYN) are extracellular. Residues 785–805 (GVLVTIMDLLVTVLNLLAISL) traverse the membrane as a helical segment. The Cytoplasmic segment spans residues 806–839 (GYFGPKCYMILFYPERNTPAYFNSMIQGYTMRRD).

This sequence belongs to the G-protein coupled receptor 3 family. TAS1R subfamily. Forms heterodimers with TAS1R3.

It localises to the cell membrane. In terms of biological role, putative taste receptor. TAS1R2/TAS1R3 recognizes diverse natural and synthetic sweeteners. This is Taste receptor type 1 member 2 (TAS1R2) from Macaca mulatta (Rhesus macaque).